The following is a 302-amino-acid chain: Nucleotide-binding protein Bamb_2855 (302 aa).

Residue 8-15 (GISGSGKS) participates in ATP binding. 57-60 (DARS) contributes to the GTP binding site.

It belongs to the RapZ-like family.

Functionally, displays ATPase and GTPase activities. This is Nucleotide-binding protein Bamb_2855 from Burkholderia ambifaria (strain ATCC BAA-244 / DSM 16087 / CCUG 44356 / LMG 19182 / AMMD) (Burkholderia cepacia (strain AMMD)).